The primary structure comprises 540 residues: Chaperonin GroEL 1 (540 aa).

ATP-binding positions include 30–33 (TLGP), lysine 51, 87–91 (DGTTT), glycine 415, 480–482 (NAA), and aspartate 496.

Belongs to the chaperonin (HSP60) family. Forms a cylinder of 14 subunits composed of two heptameric rings stacked back-to-back. Interacts with the co-chaperonin GroES.

The protein resides in the cytoplasm. The catalysed reaction is ATP + H2O + a folded polypeptide = ADP + phosphate + an unfolded polypeptide.. Together with its co-chaperonin GroES, plays an essential role in assisting protein folding. The GroEL-GroES system forms a nano-cage that allows encapsulation of the non-native substrate proteins and provides a physical environment optimized to promote and accelerate protein folding. The sequence is that of Chaperonin GroEL 1 from Bradyrhizobium diazoefficiens (strain JCM 10833 / BCRC 13528 / IAM 13628 / NBRC 14792 / USDA 110).